The primary structure comprises 134 residues: Small ribosomal subunit protein uS8c (134 aa).

Component of the chloroplast small ribosomal subunit (SSU). Mature 70S chloroplast ribosomes of higher plants consist of a small (30S) and a large (50S) subunit. The 30S small subunit contains 1 molecule of ribosomal RNA (16S rRNA) and 24 different proteins. The 50S large subunit contains 3 rRNA molecules (23S, 5S and 4.5S rRNA) and 33 different proteins.

Its subcellular location is the plastid. The protein resides in the chloroplast. Component of the chloroplast ribosome (chloro-ribosome), a dedicated translation machinery responsible for the synthesis of chloroplast genome-encoded proteins, including proteins of the transcription and translation machinery and components of the photosynthetic apparatus. The polypeptide is Small ribosomal subunit protein uS8c (rps8) (Spinacia oleracea (Spinach)).